The following is a 101-amino-acid chain: Glutaredoxin-1 (101 aa).

The Glutaredoxin domain occupies 5–101; it reads KDRVEKLIQT…GSLSKMIAAL (97 aa). C25 and C28 are oxidised to a cystine.

Belongs to the glutaredoxin family.

The protein localises to the cytoplasm. It is found in the cytosol. In terms of biological role, multifunctional enzyme with glutathione-dependent oxidoreductase, glutathione peroxidase and glutathione S-transferase (GST) activity. The disulfide bond functions as an electron carrier in the glutathione-dependent synthesis of deoxyribonucleotides by the enzyme ribonucleotide reductase. In addition, it is also involved in reducing cytosolic protein- and non-protein-disulfides in a coupled system with glutathione reductase. May play a role in protection against oxidative stress caused by superoxide in vivo by regulating the redox state of the protein sulfhydryl groups. In Rhizophagus irregularis (strain DAOM 181602 / DAOM 197198 / MUCL 43194) (Arbuscular mycorrhizal fungus), this protein is Glutaredoxin-1.